A 227-amino-acid polypeptide reads, in one-letter code: Translation initiation factor 6 (227 aa).

It belongs to the eIF-6 family.

Binds to the 50S ribosomal subunit and prevents its association with the 30S ribosomal subunit to form the 70S initiation complex. The polypeptide is Translation initiation factor 6 (Pyrococcus furiosus (strain ATCC 43587 / DSM 3638 / JCM 8422 / Vc1)).